Here is a 571-residue protein sequence, read N- to C-terminus: MDFIRRKYLIYTVENNINFFTQELADKISNFCLNHVVAINYIIKKYHKSVLTKDIFNNTNFYIFLHFIRDCETYDIVLKSSFDVTLLYLNQLVKNYTSFTDFIDIYKQQSNTLLDDKRFLFVTKLSPYFQDIISVNFSTELNPLFHLNEPIKDLEIIYSKLFKETRFIKVDRISVLRLLIWAYSLKMDTGMKFDDNDSHDLYTILQKTGPVVSSIMTETFKEFVFPKNSTTSYWLFMKERIYNDEKVYTNEPAITIYEKVLSYIYSEIKQARVNKNMLKVVYMLDSDSEIKKFMLELIYGIPGDILSIIDERDETWKSYFVDFYHDNFIDDKTFTSANRFYDDLFNVIAKIDPEKFDIRRDIESIFRTDATLVKRFDDMKINSTYVSQMIYQTQNVDLLALENKKLCQIYNKDTEYAIKEYNTYLYLNEDNPIVIYKGELKKLSDLDLNSPSIVFSLFSKSLLKYYLDSKLASLGLIIENYKDDIILKIITGSSCLQNFTSFIVYATCNDKSILKSVVRTIINHFKVAIIILFKQFLQENIYYVNEYLDNTKHLSKNDKKFILQIINGNYD.

It belongs to the chordopoxvirinae E6 family.

The protein localises to the virion. In terms of biological role, late protein which may play a role in the virion morphogenesis and have therefore an indirect role on viral transcription ability. The polypeptide is Protein E6 homolog (Vertebrata (FPV)).